A 312-amino-acid polypeptide reads, in one-letter code: HPr kinase/phosphorylase (312 aa).

Active-site residues include histidine 139 and lysine 160. 154-161 provides a ligand contact to ATP; the sequence is GSSGVGKS. A Mg(2+)-binding site is contributed by serine 161. The Proton acceptor; for phosphorylation activity. Proton donor; for dephosphorylation activity role is filled by aspartate 178. The segment at 202–211 is important for the catalytic mechanism of both phosphorylation and dephosphorylation; it reads LEIRGLGIIN. Residue glutamate 203 participates in Mg(2+) binding. Residue arginine 244 is part of the active site. The segment at 265–270 is important for the catalytic mechanism of dephosphorylation; that stretch reads PVRPGR.

This sequence belongs to the HPrK/P family. As to quaternary structure, homohexamer. Mg(2+) is required as a cofactor.

It carries out the reaction [HPr protein]-L-serine + ATP = [HPr protein]-O-phospho-L-serine + ADP + H(+). The catalysed reaction is [HPr protein]-O-phospho-L-serine + phosphate + H(+) = [HPr protein]-L-serine + diphosphate. In terms of biological role, catalyzes the ATP- as well as the pyrophosphate-dependent phosphorylation of a specific serine residue in HPr, a phosphocarrier protein of the phosphoenolpyruvate-dependent sugar phosphotransferase system (PTS). HprK/P also catalyzes the pyrophosphate-producing, inorganic phosphate-dependent dephosphorylation (phosphorolysis) of seryl-phosphorylated HPr (P-Ser-HPr). The two antagonistic activities of HprK/P are regulated by several intracellular metabolites, which change their concentration in response to the absence or presence of rapidly metabolisable carbon sources (glucose, fructose, etc.) in the growth medium. Therefore, by controlling the phosphorylation state of HPr, HPrK/P is a sensor enzyme that plays a major role in the regulation of carbon metabolism and sugar transport: it mediates carbon catabolite repression (CCR), and regulates PTS-catalyzed carbohydrate uptake and inducer exclusion. The sequence is that of HPr kinase/phosphorylase from Listeria innocua serovar 6a (strain ATCC BAA-680 / CLIP 11262).